The sequence spans 96 residues: MASKKAPTGHFSILYFAAASTFTGKTSEHLPAPIKACDLFDTLEDRYPGIKGKVLASCAVTVDLEYIDINEGDAADLERVIQEGDEVAIIPPVSSG.

G96 carries the post-translational modification 1-thioglycine; alternate. Glycyl adenylate; alternate is present on G96.

This sequence belongs to the MoaD family. MOCS2A subfamily. In terms of assembly, heterotetramer; composed of 2 small (MOCS2A) and 2 large (MOCS2B) subunits. C-terminal thiocarboxylation occurs in 2 steps, it is first acyl-adenylated (-COAMP) via the hesA/moeB/thiF part of UBA4, then thiocarboxylated (-COSH) via the rhodanese domain of UBA4.

The protein localises to the cytoplasm. The protein operates within cofactor biosynthesis; molybdopterin biosynthesis. Its function is as follows. Acts as a sulfur carrier required for molybdopterin biosynthesis. Component of the molybdopterin synthase complex that catalyzes the conversion of precursor Z into molybdopterin by mediating the incorporation of 2 sulfur atoms into precursor Z to generate a dithiolene group. In the complex, serves as sulfur donor by being thiocarboxylated (-COSH) at its C-terminus by UBA4. After interaction with MOCS2B, the sulfur is then transferred to precursor Z to form molybdopterin. The protein is Molybdopterin synthase sulfur carrier subunit of Phaeosphaeria nodorum (strain SN15 / ATCC MYA-4574 / FGSC 10173) (Glume blotch fungus).